Reading from the N-terminus, the 231-residue chain is MKSGLLFTTASLALTASAHYVFPALVQDGAATGDWKYVRDWTGSYGNGPVEDVTSLDIRCNKDASTNGNATETLPVKAGEEIGFTVRTNIGHPGPLLAYMAKAPGDASDFDGDGQVWFKIYEDGPTVTDDGLTWPSDGATNVNFTIPSSLPDGDYLLRVEHIALHGAGTEGGAQFYLSCGQVSVTGGGNGDPAPLVAFPGAYDPTDPGILINIYWPVPTNYTPPGPKVWSG.

Residues 1–18 form the signal peptide; it reads MKSGLLFTTASLALTASA. Residue His19 coordinates Cu(2+). Cys60 and Cys179 are oxidised to a cystine. N-linked (GlcNAc...) asparagine glycans are attached at residues Asn69 and Asn143. His165 and Gln174 together coordinate O2. Tyr176 lines the Cu(2+) pocket.

Belongs to the polysaccharide monooxygenase AA9 family. Requires Cu(2+) as cofactor.

The protein localises to the secreted. It catalyses the reaction [(1-&gt;4)-beta-D-glucosyl]n+m + reduced acceptor + O2 = 4-dehydro-beta-D-glucosyl-[(1-&gt;4)-beta-D-glucosyl]n-1 + [(1-&gt;4)-beta-D-glucosyl]m + acceptor + H2O.. In terms of biological role, lytic polysaccharide monooxygenase (LPMO) that depolymerizes crystalline and amorphous polysaccharides via the oxidation of scissile alpha- or beta-(1-4)-glycosidic bonds, yielding C1 oxidation products. Catalysis by LPMOs requires the reduction of the active-site copper from Cu(II) to Cu(I) by a reducing agent and H(2)O(2) or O(2) as a cosubstrate. The sequence is that of AA9 family lytic polysaccharide monooxygenase C from Emericella nidulans (strain FGSC A4 / ATCC 38163 / CBS 112.46 / NRRL 194 / M139) (Aspergillus nidulans).